The following is a 214-amino-acid chain: Pyrrolidone-carboxylate peptidase (214 aa).

Catalysis depends on residues E78, C141, and H165.

Belongs to the peptidase C15 family. In terms of assembly, homotetramer.

Its subcellular location is the cytoplasm. It catalyses the reaction Release of an N-terminal pyroglutamyl group from a polypeptide, the second amino acid generally not being Pro.. Functionally, removes 5-oxoproline from various penultimate amino acid residues except L-proline. The polypeptide is Pyrrolidone-carboxylate peptidase (Streptococcus pneumoniae serotype 2 (strain D39 / NCTC 7466)).